Reading from the N-terminus, the 545-residue chain is CTP synthase (545 aa).

Positions 1–266 (MATNYIFVTG…DDIVTKRFNL (266 aa)) are amidoligase domain. Ser14 is a CTP binding site. A UTP-binding site is contributed by Ser14. ATP is bound by residues 15–20 (SLGKGI) and Asp72. Mg(2+) is bound by residues Asp72 and Glu140. Residues 147 to 149 (DIE), 187 to 192 (KTKPTQ), and Lys223 each bind CTP. UTP-binding positions include 187 to 192 (KTKPTQ) and Lys223. 239 to 241 (RDV) serves as a coordination point for ATP. In terms of domain architecture, Glutamine amidotransferase type-1 spans 291-542 (TVGFVGKYVE…IEAAGEFHKE (252 aa)). Gly352 is a binding site for L-glutamine. Residue Cys379 is the Nucleophile; for glutamine hydrolysis of the active site. Residues 380-383 (LGMQ), Glu403, and Arg470 contribute to the L-glutamine site. Active-site residues include His515 and Glu517.

The protein belongs to the CTP synthase family. Homotetramer.

The enzyme catalyses UTP + L-glutamine + ATP + H2O = CTP + L-glutamate + ADP + phosphate + 2 H(+). It carries out the reaction L-glutamine + H2O = L-glutamate + NH4(+). The catalysed reaction is UTP + NH4(+) + ATP = CTP + ADP + phosphate + 2 H(+). The protein operates within pyrimidine metabolism; CTP biosynthesis via de novo pathway; CTP from UDP: step 2/2. Allosterically activated by GTP, when glutamine is the substrate; GTP has no effect on the reaction when ammonia is the substrate. The allosteric effector GTP functions by stabilizing the protein conformation that binds the tetrahedral intermediate(s) formed during glutamine hydrolysis. Inhibited by the product CTP, via allosteric rather than competitive inhibition. In terms of biological role, catalyzes the ATP-dependent amination of UTP to CTP with either L-glutamine or ammonia as the source of nitrogen. Regulates intracellular CTP levels through interactions with the four ribonucleotide triphosphates. The polypeptide is CTP synthase (Idiomarina loihiensis (strain ATCC BAA-735 / DSM 15497 / L2-TR)).